We begin with the raw amino-acid sequence, 389 residues long: Methionyl-tRNA formyltransferase, mitochondrial (389 aa).

Belongs to the Fmt family.

It is found in the mitochondrion. The catalysed reaction is L-methionyl-tRNA(fMet) + (6R)-10-formyltetrahydrofolate = N-formyl-L-methionyl-tRNA(fMet) + (6S)-5,6,7,8-tetrahydrofolate + H(+). Functionally, methionyl-tRNA formyltransferase that formylates methionyl-tRNA in mitochondria and is crucial for translation initiation. This chain is Methionyl-tRNA formyltransferase, mitochondrial (MTFMT), found in Homo sapiens (Human).